The chain runs to 490 residues: Vacuolar amino acid transporter 7 (490 aa).

At 1–6 the chain is on the cytoplasmic side; it reads MEATSS. Residues 7 to 27 traverse the membrane as a helical segment; that stretch reads ALSSTANLVKTIVGAGTLAIP. The Vacuolar segment spans residues 28–34; it reads YSFKSDG. The helical transmembrane segment at 35-55 threads the bilayer; the sequence is VLVGVILTLLAAVTSGLGLFV. The Cytoplasmic segment spans residues 56–84; it reads LSKCSKTLINPRNSSFFTLCMLTYPTLAP. Residues 85–105 form a helical membrane-spanning segment; sequence IFDLAMIVQCFGVGLSYLVLI. Residues 106-108 lie on the Vacuolar side of the membrane; it reads GDL. The chain crosses the membrane as a helical span at residues 109–129; the sequence is FPGLFGGERNYWIIASAVIII. Over 130–143 the chain is Cytoplasmic; that stretch reads PLCLVKKLDQLKYS. Residues 144–164 form a helical membrane-spanning segment; the sequence is SILGLFALAYISILVFSHFVF. The Vacuolar segment spans residues 165–190; the sequence is ELGKGELTNILRNDICWWKIHDFKGL. A helical transmembrane segment spans residues 191 to 211; sequence LSTFSIIIFAFTGSMNLFPMI. Residues 212–221 are Cytoplasmic-facing; that stretch reads NELKDNSMEN. Residues 222–242 traverse the membrane as a helical segment; it reads ITFVINNSISLSTALFLIVGL. Over 243 to 264 the chain is Vacuolar; sequence SGYLTFGNETLGNLMLNYDPNS. A helical membrane pass occupies residues 265–285; the sequence is IWIVIGKFCLGSMLILSFPLL. At 286-397 the chain is on the cytoplasmic side; it reads FHPLRIAVNN…FVKSRFYWIT (112 aa). A disordered region spans residues 355 to 374; the sequence is NGNFDNGSIESQENNNDERG. The span at 357–368 shows a compositional bias: polar residues; that stretch reads NFDNGSIESQEN. Residues 398–418 traverse the membrane as a helical segment; that stretch reads ALLLISMYTLALSVQSFALVL. Topologically, residues 419–428 are vacuolar; that stretch reads SFVGATGSTS. Residues 429–449 form a helical membrane-spanning segment; that stretch reads ISFTLPGLLGYKLIGLDSLAI. The Cytoplasmic segment spans residues 450–463; sequence GKMIPPKDRFYKRC. Residues 464–484 traverse the membrane as a helical segment; the sequence is SLLLVFYGLSVMFLSLYVTVF. Residues 485-490 are Vacuolar-facing; the sequence is NRSDEA.

This sequence belongs to the amino acid/polyamine transporter 2 family.

The protein localises to the vacuole membrane. Probable amino acid transporter of unknown specificity. This chain is Vacuolar amino acid transporter 7 (AVT7), found in Saccharomyces cerevisiae (strain ATCC 204508 / S288c) (Baker's yeast).